The following is a 379-amino-acid chain: Anhydro-N-acetylmuramic acid kinase (379 aa).

Residue 9-16 (GTSADGVD) coordinates ATP.

Belongs to the anhydro-N-acetylmuramic acid kinase family.

The enzyme catalyses 1,6-anhydro-N-acetyl-beta-muramate + ATP + H2O = N-acetyl-D-muramate 6-phosphate + ADP + H(+). Its pathway is amino-sugar metabolism; 1,6-anhydro-N-acetylmuramate degradation. It functions in the pathway cell wall biogenesis; peptidoglycan recycling. Its function is as follows. Catalyzes the specific phosphorylation of 1,6-anhydro-N-acetylmuramic acid (anhMurNAc) with the simultaneous cleavage of the 1,6-anhydro ring, generating MurNAc-6-P. Is required for the utilization of anhMurNAc either imported from the medium or derived from its own cell wall murein, and thus plays a role in cell wall recycling. The protein is Anhydro-N-acetylmuramic acid kinase of Prochlorococcus marinus (strain MIT 9313).